A 390-amino-acid polypeptide reads, in one-letter code: MLKTLKDKKLENCSSINNKSKKQKHIVVGLSGGVDSSLSAALLMEDGWKVEGLTLWLMKGEGSCCSEGLVDAAGLCEDLGIQHNILDSRVIFEREVIKKTTEGYESGYTPLPCSMCNKNVKFEEMLKFVIKQKEFTYIATGHYARVIKSSCEHINNSENFQFKDFLLLRGADRNKDQSYFLYSLSQEVLSRLILPLGDLKKEETRKEALRLGLRTAKKPESQDLCLVEHYGSMQKFIDNHVKTKNGEIKHINGKTLGTHNGIQHFTIGQRKGLGIAWPEPLYVESLDKQKNIVYVANKNDLLKREAIIKEVNWVSIEAPIKEIEVEAQIRYRSEPVKGILVPLKSKDNLTKRFKLIFEDNQSSVTPGQAAVFYKGEILLGGGLISEFSKK.

ATP contacts are provided by residues 29-36 (GLSGGVDS) and leucine 55. Cysteine 116 serves as the catalytic Nucleophile. Cysteine 116 and cysteine 225 form a disulfide bridge. Glycine 141 is a binding site for ATP. Residues 175–177 (KDQ) are interaction with tRNA. The Cysteine persulfide intermediate role is filled by cysteine 225. Residues 330–331 (RY) are interaction with tRNA.

It belongs to the MnmA/TRMU family.

Its subcellular location is the cytoplasm. It catalyses the reaction S-sulfanyl-L-cysteinyl-[protein] + uridine(34) in tRNA + AH2 + ATP = 2-thiouridine(34) in tRNA + L-cysteinyl-[protein] + A + AMP + diphosphate + H(+). Catalyzes the 2-thiolation of uridine at the wobble position (U34) of tRNA, leading to the formation of s(2)U34. This is tRNA-specific 2-thiouridylase MnmA from Prochlorococcus marinus (strain MIT 9515).